The primary structure comprises 347 residues: Selenide, water dikinase (347 aa).

Residue Cys16 is part of the active site. ATP-binding positions include Lys19 and 47 to 49 (TRD). Asp50 is a Mg(2+) binding site. ATP is bound by residues Asp67, Asp90, and 138–140 (GHS). Mg(2+) is bound at residue Asp90. Position 226 (Asp226) interacts with Mg(2+).

Belongs to the selenophosphate synthase 1 family. Class I subfamily. As to quaternary structure, homodimer. Mg(2+) serves as cofactor.

The catalysed reaction is hydrogenselenide + ATP + H2O = selenophosphate + AMP + phosphate + 2 H(+). Functionally, synthesizes selenophosphate from selenide and ATP. This chain is Selenide, water dikinase, found in Photorhabdus laumondii subsp. laumondii (strain DSM 15139 / CIP 105565 / TT01) (Photorhabdus luminescens subsp. laumondii).